The sequence spans 275 residues: 3-methyl-2-oxobutanoate hydroxymethyltransferase (275 aa).

Mg(2+)-binding residues include Asp44 and Asp83. 3-methyl-2-oxobutanoate is bound by residues 44–45 (DS), Asp83, and Lys113. Position 115 (Glu115) interacts with Mg(2+). Glu182 (proton acceptor) is an active-site residue.

It belongs to the PanB family. In terms of assembly, homodecamer; pentamer of dimers. It depends on Mg(2+) as a cofactor.

Its subcellular location is the cytoplasm. The catalysed reaction is 3-methyl-2-oxobutanoate + (6R)-5,10-methylene-5,6,7,8-tetrahydrofolate + H2O = 2-dehydropantoate + (6S)-5,6,7,8-tetrahydrofolate. It participates in cofactor biosynthesis; (R)-pantothenate biosynthesis; (R)-pantoate from 3-methyl-2-oxobutanoate: step 1/2. In terms of biological role, catalyzes the reversible reaction in which hydroxymethyl group from 5,10-methylenetetrahydrofolate is transferred onto alpha-ketoisovalerate to form ketopantoate. The protein is 3-methyl-2-oxobutanoate hydroxymethyltransferase of Clostridium botulinum (strain 657 / Type Ba4).